The primary structure comprises 283 residues: Phosphate import ATP-binding protein PstB 1 (283 aa).

A compositionally biased stretch (acidic residues) spans 1–16 (MSSDDTTDPTADDESF). Residues 1-35 (MSSDDTTDPTADDESFTDSPVAGLEQSTTTRGSGR) form a disordered region. Residues 38 to 278 (ISARNINVWY…PSSERVENYI (241 aa)) enclose the ABC transporter domain. 70–77 (GPSGCGKS) is an ATP binding site.

It belongs to the ABC transporter superfamily. Phosphate importer (TC 3.A.1.7) family. As to quaternary structure, the complex is composed of two ATP-binding proteins (PstB), two transmembrane proteins (PstC and PstA) and a solute-binding protein (PstS).

The protein resides in the cell membrane. The enzyme catalyses phosphate(out) + ATP + H2O = ADP + 2 phosphate(in) + H(+). In terms of biological role, part of the ABC transporter complex PstSACB involved in phosphate import. Responsible for energy coupling to the transport system. The protein is Phosphate import ATP-binding protein PstB 1 of Natronomonas pharaonis (strain ATCC 35678 / DSM 2160 / CIP 103997 / JCM 8858 / NBRC 14720 / NCIMB 2260 / Gabara) (Halobacterium pharaonis).